Reading from the N-terminus, the 659-residue chain is MENKGFELVSTYKPTGDQPRAIQELIEGLEQNKKSQVLLGVTGSGKTFTIANVIKAANRPVLLLSHNKTLASQLYSELKDFFPNNRVEYFVSYFDYYRPEAYMPNTDTYIDKTTKSNWDLEEMRMSTLNSISTKRDTIVVASVASIYGALKPKEYWSAFYNISIAQKISRKEFLLDLVQRGYKRNNVASEPGSFNAKGDFVDIIPAWTKGFHIRVEFFGDEIEKISTIDSNNKITIEKFKEYLIFPASAYTAPTGTIEAAVLRIREELHQRLEYFEKEGKLLEKQRLEDRTRNDLESLEEFGFCPGIENYSRHVDGRAEGEQPFTLFDYLPNDALLIIDESHMMIPQLNGMYNGDRARKLNLVNYGFRLPSALDNRPLQFHEFEKYEFQKIYISATPSDYEINQAHGEIVKQIIRPTGLLDPLIEIRREQNQVEDMFDEIQKQKAKKQRTLILATTKKVSEELTRYFQEKKEKVAYIHSDYTTFERNEILRKLRKGVYDTVIGINLLREGIDLPEVSLIMVLDANKESFFRSKKSLIQIVGRAARNVNGRVIFYANNISKSMEETIYDNLDKRKIQMDYNKKHNIIPKTIIKPITEAIEDKKLNESLISFMSHSKTKKSIKEKEALVKDLRNQMLDASKQLNFERAAELRDIILELEAN.

Residues 27–414 form the Helicase ATP-binding domain; that stretch reads EGLEQNKKSQ…AHGEIVKQII (388 aa). ATP is bound at residue 40–47; that stretch reads GVTGSGKT. Residues 93–116 carry the Beta-hairpin motif; the sequence is YFDYYRPEAYMPNTDTYIDKTTKS. A Helicase C-terminal domain is found at 432–594; that stretch reads QVEDMFDEIQ…IIPKTIIKPI (163 aa). The region spanning 624–659 is the UVR domain; sequence EALVKDLRNQMLDASKQLNFERAAELRDIILELEAN.

Belongs to the UvrB family. In terms of assembly, forms a heterotetramer with UvrA during the search for lesions. Interacts with UvrC in an incision complex.

Its subcellular location is the cytoplasm. Its function is as follows. The UvrABC repair system catalyzes the recognition and processing of DNA lesions. A damage recognition complex composed of 2 UvrA and 2 UvrB subunits scans DNA for abnormalities. Upon binding of the UvrA(2)B(2) complex to a putative damaged site, the DNA wraps around one UvrB monomer. DNA wrap is dependent on ATP binding by UvrB and probably causes local melting of the DNA helix, facilitating insertion of UvrB beta-hairpin between the DNA strands. Then UvrB probes one DNA strand for the presence of a lesion. If a lesion is found the UvrA subunits dissociate and the UvrB-DNA preincision complex is formed. This complex is subsequently bound by UvrC and the second UvrB is released. If no lesion is found, the DNA wraps around the other UvrB subunit that will check the other stand for damage. This chain is UvrABC system protein B, found in Mycoplasma mobile (strain ATCC 43663 / 163K / NCTC 11711) (Mesomycoplasma mobile).